The sequence spans 348 residues: Phospho-2-dehydro-3-deoxyheptonate aldolase, Trp-sensitive (348 aa).

Belongs to the class-I DAHP synthase family.

The enzyme catalyses D-erythrose 4-phosphate + phosphoenolpyruvate + H2O = 7-phospho-2-dehydro-3-deoxy-D-arabino-heptonate + phosphate. The protein operates within metabolic intermediate biosynthesis; chorismate biosynthesis; chorismate from D-erythrose 4-phosphate and phosphoenolpyruvate: step 1/7. Its function is as follows. Stereospecific condensation of phosphoenolpyruvate (PEP) and D-erythrose-4-phosphate (E4P) giving rise to 3-deoxy-D-arabino-heptulosonate-7-phosphate (DAHP). In Buchnera aphidicola subsp. Baizongia pistaciae (strain Bp), this protein is Phospho-2-dehydro-3-deoxyheptonate aldolase, Trp-sensitive (aroH).